Here is a 223-residue protein sequence, read N- to C-terminus: Thylakoid lumenal 15.0 kDa protein 2, chloroplastic (223 aa).

The protein resides in the plastid. Its subcellular location is the chloroplast thylakoid lumen. The sequence is that of Thylakoid lumenal 15.0 kDa protein 2, chloroplastic from Arabidopsis thaliana (Mouse-ear cress).